Consider the following 261-residue polypeptide: Ribosomal RNA small subunit methyltransferase A (261 aa).

S-adenosyl-L-methionine is bound by residues N20, L22, G47, E68, D90, and N110.

The protein belongs to the class I-like SAM-binding methyltransferase superfamily. rRNA adenine N(6)-methyltransferase family. RsmA subfamily.

It localises to the cytoplasm. The catalysed reaction is adenosine(1518)/adenosine(1519) in 16S rRNA + 4 S-adenosyl-L-methionine = N(6)-dimethyladenosine(1518)/N(6)-dimethyladenosine(1519) in 16S rRNA + 4 S-adenosyl-L-homocysteine + 4 H(+). In terms of biological role, specifically dimethylates two adjacent adenosines (A1518 and A1519) in the loop of a conserved hairpin near the 3'-end of 16S rRNA in the 30S particle. May play a critical role in biogenesis of 30S subunits. This is Ribosomal RNA small subunit methyltransferase A from Prosthecochloris aestuarii (strain DSM 271 / SK 413).